The following is a 99-amino-acid chain: Elongin-C (99 aa).

N-acetylserine is present on serine 2. Serine 2 is subject to Phosphoserine.

Belongs to the SKP1 family. In terms of assembly, heterodimer with ELA1. Component of a CRL3 E3 ubiquitin ligase complex consisting of the cullin CUL3, the linker protein ELC1, the substrate receptor ELA1, and the RING protein HRT1. Interacts with CIN5. Interacts with PCL6. Interacts with SNF4. Interacts with the large RNA polymerase II subunit RPO21 in a manner dependent on DEF1. Interacts with DEF1. Interacts with RAD7. Interacts with RAD16.

It is found in the cytoplasm. Its subcellular location is the nucleus. Its function is as follows. As part of the CRL3 E3 ubiquitin ligase complex; polyubiquitylates monoubiquitylated RNA polymerase II subunit RPO21 to trigger its proteolysis; plays a role in global genomic repair. Prevents degradation of interacting proteins like PCL6 by the proteasome. This is Elongin-C (ELC1) from Saccharomyces cerevisiae (strain ATCC 204508 / S288c) (Baker's yeast).